Consider the following 263-residue polypeptide: Exosome complex component Rrp4 (263 aa).

Residues 51–127 (GKYIPSRKDF…KAMKVELSMR (77 aa)) form the S1 motif domain. Residues 135–196 (SKGRIIEVVP…DRLTTAIEMI (62 aa)) enclose the KH domain. Residues 213-263 (LRGEPEGTEGSDEEQLVDEEVAGVSLEDDDVTEETSRKVDVLLDNDTDETN) form a disordered region. Residues 218 to 245 (EGTEGSDEEQLVDEEVAGVSLEDDDVTE) show a composition bias toward acidic residues.

Belongs to the RRP4 family. As to quaternary structure, component of the archaeal exosome complex. Forms a trimer of Rrp4 and/or Csl4 subunits. The trimer associates with a hexameric ring-like arrangement composed of 3 Rrp41-Rrp42 heterodimers.

It localises to the cytoplasm. Non-catalytic component of the exosome, which is a complex involved in RNA degradation. Increases the RNA binding and the efficiency of RNA degradation. Confers strong poly(A) specificity to the exosome. The protein is Exosome complex component Rrp4 of Methanococcoides burtonii (strain DSM 6242 / NBRC 107633 / OCM 468 / ACE-M).